The following is a 746-amino-acid chain: tRNA (cytosine(34)-C(5))-methyltransferase (746 aa).

The interval 1 to 30 (MGRNQKQNFFAARKRQKRENGPKRTDRQAQ) is disordered. Residues 18–30 (RENGPKRTDRQAQ) show a composition bias toward basic and acidic residues. S-adenosyl-L-methionine-binding positions include 184 to 190 (CAAPGSK), Asp-216, Asp-243, and Asp-270. The active-site Nucleophile is Cys-323. 2 disordered regions span residues 454–475 (QPAA…SVPW) and 701–746 (SAEA…VATS). Positions 463 to 472 (ADGKPIEEKS) are enriched in basic and acidic residues. The segment covering 704–714 (AEADSSGDGDA) has biased composition (acidic residues). A compositionally biased stretch (polar residues) spans 731-746 (AETTGTPMDTEVVATS).

Belongs to the class I-like SAM-binding methyltransferase superfamily. RsmB/NOP family. TRM4 subfamily. As to expression, ubiquitously expressed during embryonic development. Some enrichment is observed in the proventriculus area of the foregut and in the hindgut.

Its subcellular location is the nucleus. The protein localises to the nucleolus. The catalysed reaction is cytidine(34) in tRNA precursor + S-adenosyl-L-methionine = 5-methylcytidine(34) in tRNA precursor + S-adenosyl-L-homocysteine + H(+). Its function is as follows. RNA methyltransferase that methylates tRNAs. Methylates cytosine to 5-methylcytosine (m5C) at position 34 of intron-containing tRNA(Leu)(CAA) precursors. Required for short-term memory. The sequence is that of tRNA (cytosine(34)-C(5))-methyltransferase from Drosophila melanogaster (Fruit fly).